The primary structure comprises 1249 residues: Protein STU1 (1249 aa).

2 stretches are compositionally biased toward low complexity: residues 138–156 (LNSS…TATK) and 555–574 (AASP…PSSA). Disordered stretches follow at residues 138–161 (LNSS…KPHE), 545–619 (KQLE…NPVF), 644–718 (HVET…LGLG), 755–846 (AEHE…NGNI), 860–891 (AFQT…RPEA), and 1084–1118 (HPAP…EKRT). Residues 581–600 (KKMDLKAMLAERRRAVKEAG) show a composition bias toward basic and acidic residues. Composition is skewed to low complexity over residues 647 to 667 (TSSP…RIRP) and 708 to 718 (SPSLSPSLGLG). Residues 755 to 774 (AEHEVDELTLKEGQKTRDDG) are compositionally biased toward basic and acidic residues. Polar residues-rich tracts occupy residues 809-822 (QQGN…SGRV), 831-844 (ATGT…SRNG), and 863-878 (TPLN…SSAI). Low complexity predominate over residues 1089 to 1111 (SSSADNSDPMTSALSQLSLSSSK).

This sequence belongs to the CLASP family. Interacts with microtubules.

Its subcellular location is the cytoplasm. The protein resides in the cytoskeleton. The protein localises to the nucleus. It localises to the spindle. Its function is as follows. Microtubule binding protein that promotes the stabilization of dynamic microtubules. Required for mitotic spindle formation. The polypeptide is Protein STU1 (STU1) (Cryptococcus neoformans var. neoformans serotype D (strain JEC21 / ATCC MYA-565) (Filobasidiella neoformans)).